Reading from the N-terminus, the 465-residue chain is UDP-N-acetylmuramate--L-alanine ligase (465 aa).

112–118 (GTHGKTT) is a binding site for ATP.

This sequence belongs to the MurCDEF family.

The protein resides in the cytoplasm. The catalysed reaction is UDP-N-acetyl-alpha-D-muramate + L-alanine + ATP = UDP-N-acetyl-alpha-D-muramoyl-L-alanine + ADP + phosphate + H(+). It participates in cell wall biogenesis; peptidoglycan biosynthesis. Cell wall formation. This chain is UDP-N-acetylmuramate--L-alanine ligase, found in Burkholderia mallei (strain NCTC 10247).